The chain runs to 738 residues: MDISINDCTDISQIKQRFHDLQVESQRTDEKLERLLSDAQPTEKFNSLIKNMAERLVLFVGQIEELKDAFCNTTIVSEEVIERIKSVDREQNRIKECLLFVRQVRDFKECLQDLNRAMHHQQWEKAADLVHRASSTSPAIIEGKFAHAVVPTAEQPLAPMDTLKEITESLHTLFWREFHKAARNQDQKEITRYFKLFPLIGKEKEGLEAYWHFFGGIIASKARATLDEPPTHALFFAQAFTGLVEHVASIIRAHTPLVQKYYKAKNTITVIEKLQGDCDRQGSIIVNTMFDVRRIDNLVSSIASYKYILLHAKLKNRAFVSDQKELERVSLQTLHPILNEMSAIVSKWNISKIFISRLVLRLSQSDGTSNDPSVQDNLICASIFNSSKMELLLKKQLLPSLLQLETYYFRRSIETSLELEEYYTKVSPWMSSIVDDVMYVTKQVFQRAFFTVSSLFFTRFVNESLIPILRNDYYVYLSHNLLTVCNIIKAQFQRLKNANSIPAKQVENYITLVNSASLSKQYLKSIVDGVSSRLEEVFAFAKDQKLVKKSIDNFLQLTVNFENLCKTSFNMYFPIFLLPRIEQCIDDSFDGINYVLSYEDYTKETEHERLVVTRLRSVWDRVLLLEQFTPENQLSLRSMACEKAASYIENLILYKIQWNDYGAMALENDISSLITIFSNDQANLRHSFERLQEILILLVWESDSTAPEQLINDLNLQLLSIDIVSAIMEKKANVQGED.

The protein belongs to the COG4 family. As to quaternary structure, component of the conserved oligomeric Golgi complex.

The protein localises to the golgi apparatus membrane. In terms of biological role, component of the peripheral membrane COG complex that is involved in intra-Golgi protein trafficking. COG is located at the cis-Golgi, and regulates tethering of retrograde intra-Golgi vesicles and possibly a number of other membrane trafficking events. This is Conserved oligomeric Golgi complex subunit 4 (cog4) from Schizosaccharomyces pombe (strain 972 / ATCC 24843) (Fission yeast).